Reading from the N-terminus, the 512-residue chain is Sorting nexin MVP1 (512 aa).

The interval 1–24 (MDLEADPWRVNSEENGNNISGSVW) is disordered. Residues 13-22 (EENGNNISGS) show a composition bias toward low complexity. The 119-residue stretch at 130 to 248 (AEDIVSVEEI…LTFLTVPTDL (119 aa)) folds into the PX domain. Residues R174, S176, K200, and R215 each contribute to the a 1,2-diacyl-sn-glycero-3-phospho-(1D-myo-inositol-3-phosphate) site.

Belongs to the sorting nexin family.

It localises to the cytoplasm. It is found in the membrane. Required for vacuolar protein sorting. The chain is Sorting nexin MVP1 (MVP1) from Kluyveromyces lactis (strain ATCC 8585 / CBS 2359 / DSM 70799 / NBRC 1267 / NRRL Y-1140 / WM37) (Yeast).